The primary structure comprises 449 residues: Phosphoglucosamine mutase (449 aa).

Ser105 (phosphoserine intermediate) is an active-site residue. Positions 105, 242, 244, and 246 each coordinate Mg(2+). Ser105 is modified (phosphoserine).

It belongs to the phosphohexose mutase family. It depends on Mg(2+) as a cofactor. In terms of processing, activated by phosphorylation.

The catalysed reaction is alpha-D-glucosamine 1-phosphate = D-glucosamine 6-phosphate. Its function is as follows. Catalyzes the conversion of glucosamine-6-phosphate to glucosamine-1-phosphate. The protein is Phosphoglucosamine mutase of Clavibacter sepedonicus (Clavibacter michiganensis subsp. sepedonicus).